The sequence spans 60 residues: Large ribosomal subunit protein bL32 (60 aa).

The segment covering 1–20 (MAKPARHTSKAKRNKRRTHY) has biased composition (basic residues). Residues 1–22 (MAKPARHTSKAKRNKRRTHYKL) form a disordered region.

Belongs to the bacterial ribosomal protein bL32 family.

In Streptococcus agalactiae serotype V (strain ATCC BAA-611 / 2603 V/R), this protein is Large ribosomal subunit protein bL32.